We begin with the raw amino-acid sequence, 971 residues long: Lon protease homolog, mitochondrial (971 aa).

The transit peptide at 1–55 (MYRAGAVLLRGATRTRLLAAASAHQSFATFSQRNQSILMMKSMELAGNSGERRFY) directs the protein to the mitochondrion. The Lon N-terminal domain occupies 89–359 (VPMLAINRYP…IALLLIQKEK (271 aa)). Residues 190–255 (TPKNETPLNG…PPSATGEKQK (66 aa)) form a disordered region. A compositionally biased stretch (pro residues) spans 214–224 (LTPPPSPPPLA). 512-519 (GPPGVGKT) lines the ATP pocket. Residues 718–749 (AEQQNEDEEPAEKATTAITENSEAEPITSTSS) form a disordered region. A compositionally biased stretch (polar residues) spans 733–749 (TAITENSEAEPITSTSS). Residues 784–971 (VTPPGVIMGL…YDELYEHLFQ (188 aa)) form the Lon proteolytic domain. Active-site residues include Ser-878 and Lys-921.

Belongs to the peptidase S16 family. In terms of assembly, homohexamer or homoheptamer. Organized in a ring with a central cavity.

It is found in the mitochondrion matrix. It catalyses the reaction Hydrolysis of proteins in presence of ATP.. In terms of biological role, ATP-dependent serine protease that mediates the selective degradation of misfolded, unassembled or oxidatively damaged polypeptides as well as certain short-lived regulatory proteins in the mitochondrial matrix. May also have a chaperone function in the assembly of inner membrane protein complexes. Participates in the regulation of mitochondrial gene expression and in the maintenance of the integrity of the mitochondrial genome. Binds to mitochondrial DNA in a site-specific manner. Involved in the degradation of transcription factor atfs-1 in the mitochondrion. The chain is Lon protease homolog, mitochondrial from Caenorhabditis elegans.